The following is a 225-amino-acid chain: Uridylate kinase (225 aa).

Residue 9–10 coordinates ATP; sequence GS. A UMP-binding site is contributed by Gly-44. Positions 45 and 49 each coordinate ATP. UMP-binding positions include Asp-66 and 114–120; that span reads THPGHTT. ATP-binding residues include Thr-140, Asn-141, Tyr-146, and Asp-149.

It belongs to the UMP kinase family. Homohexamer.

The protein resides in the cytoplasm. It carries out the reaction UMP + ATP = UDP + ADP. It participates in pyrimidine metabolism; CTP biosynthesis via de novo pathway; UDP from UMP (UMPK route): step 1/1. Its activity is regulated as follows. Inhibited by UTP. In terms of biological role, catalyzes the reversible phosphorylation of UMP to UDP. In Pyrococcus abyssi (strain GE5 / Orsay), this protein is Uridylate kinase.